Here is a 714-residue protein sequence, read N- to C-terminus: ATP-dependent RNA helicase MSS116, mitochondrial (714 aa).

The N-terminal 37 residues, 1 to 37, are a transit peptide targeting the mitochondrion; the sequence is MSWVRSVAIRTALCRQVRSRYQSYGSTRLFSSSLRSW. The short motif at 74–102 is the Q motif element; that stretch reads SLEASRKFDKSIFRGLYNSKMKNMTVVQQ. Residues 106 to 296 form the Helicase ATP-binding domain; that stretch reads MPMMDTKTGV…HETIGKEYEY (191 aa). 119–126 contributes to the ATP binding site; sequence AKTGTGKT. The DEAD box signature appears at 234–237; the sequence is DEAD. The Helicase C-terminal domain occupies 335–498; the sequence is HINDKYFKAI…TSPDHFQRLG (164 aa). Positions 581 to 714 are disordered; that stretch reads SSNDRKSKRT…TYGRRDDSDE (134 aa). Basic and acidic residues-rich tracts occupy residues 619–640, 656–671, and 679–697; these read RSFD…DRKS, YGDK…DKSY, and SNDR…EKRN.

This sequence belongs to the DEAD box helicase family. DDX18/HAS1 subfamily.

It is found in the mitochondrion matrix. The catalysed reaction is ATP + H2O = ADP + phosphate + H(+). Functionally, ATP-dependent RNA helicase required for mitochondrial splicing of group I and II introns. Also required for efficient mitochondrial translation. The protein is ATP-dependent RNA helicase MSS116, mitochondrial (MSS116) of Meyerozyma guilliermondii (strain ATCC 6260 / CBS 566 / DSM 6381 / JCM 1539 / NBRC 10279 / NRRL Y-324) (Yeast).